A 131-amino-acid chain; its full sequence is Small ribosomal subunit protein uS8 (131 aa).

It belongs to the universal ribosomal protein uS8 family. Part of the 30S ribosomal subunit. Contacts proteins S5 and S12.

In terms of biological role, one of the primary rRNA binding proteins, it binds directly to 16S rRNA central domain where it helps coordinate assembly of the platform of the 30S subunit. This Bacteroides thetaiotaomicron (strain ATCC 29148 / DSM 2079 / JCM 5827 / CCUG 10774 / NCTC 10582 / VPI-5482 / E50) protein is Small ribosomal subunit protein uS8.